The following is a 434-amino-acid chain: Asparagine--tRNA ligase (434 aa).

The protein belongs to the class-II aminoacyl-tRNA synthetase family.

The protein resides in the cytoplasm. The enzyme catalyses tRNA(Asn) + L-asparagine + ATP = L-asparaginyl-tRNA(Asn) + AMP + diphosphate + H(+). This Pyrococcus abyssi (strain GE5 / Orsay) protein is Asparagine--tRNA ligase.